The following is a 112-amino-acid chain: CLAVATA3/ESR (CLE)-related protein 44 (112 aa).

Positions 1 to 39 (MATTIDQTSIKSLHFHQVIRLIITIIFLAFLFLIGPTSS) are cleaved as a signal peptide. Residues 41 to 112 (NHHLHESSSK…VPSGPNPISN (72 aa)) form a disordered region. A compositionally biased stretch (polar residues) spans 62–71 (QPSTPSSSTM). Hydroxyproline is present on residues Pro104 and Pro107. The O-linked (Ara...) hydroxyproline glycan is linked to Pro107.

The protein belongs to the CLV3/ESR signal peptide family. In terms of assembly, interacts specifically with the leucine-rich repeat receptor-like protein kinase TDR, especially in the presence of SERK2. The O-glycosylation (arabinosylation) of the hydroxyproline Pro-107 enhances binding affinity of the CLE44p peptide for its receptor. In terms of tissue distribution, mostly expressed in flowers and leaves. Widely expressed along the vascular strands. In roots and hypocotyls, present in endodermal cells as well as cells in the phloem and the adjacent pericycle.

Its subcellular location is the secreted. The protein localises to the extracellular space. Its function is as follows. Extracellular signal peptide that regulates cell fate. May act with TDR as a ligand-receptor pair in a signal transduction pathway that represses tracheary element differentiation but promotes the formation of procambial cells adjacent to phloem cells in the veins. Regulates the transition of protophloem cells from proliferation to differentiation, thus impinging on postembryonic growth capacity of the root meristem; this signaling pathway requires CRN and CLV2. This chain is CLAVATA3/ESR (CLE)-related protein 44, found in Arabidopsis thaliana (Mouse-ear cress).